Here is a 106-residue protein sequence, read N- to C-terminus: Large ribosomal subunit protein uL24 (106 aa).

This sequence belongs to the universal ribosomal protein uL24 family. Part of the 50S ribosomal subunit.

One of two assembly initiator proteins, it binds directly to the 5'-end of the 23S rRNA, where it nucleates assembly of the 50S subunit. Functionally, one of the proteins that surrounds the polypeptide exit tunnel on the outside of the subunit. The protein is Large ribosomal subunit protein uL24 of Thermosipho africanus (strain TCF52B).